A 709-amino-acid polypeptide reads, in one-letter code: MATPGSEPQAFAPALSVTALHPHLHQHHQHHQHHQHHGGTGGTGFNLPLNRGLERALEEAANSGGLNLSARKLKEFPRTTAPGHDLSDTVRADLSKNRLVEVPMELCQFVSLEILNLYHNCIRVIPEAIVNLQMLTHLNLSRNQLSALPACLCGLPLKVLIASNNKLGSLPEEIGQLKQLMELDVSCNEITALPQQIGQLKSLRELNVRRNYLKVLPPELVDLPLVKFDFSCNKVLVIPVCFREMKQLQVLLLENNPLQSPPAQICTKGKVHIFKYLSIQACQIKTSDSLYLPTIERPHLHQHVEDSKKDSDSGVGSDNGDKRLSATEPSDEDTVSLNAPMSNIVEEDQTIKEDACHRLTPTKGEFQPKPSILGDSGISGQEREQLAGRADARHSGLMNYIKDQAEDCEELLRIEEDAHWHMEELLNSSKDRELDIAMIEQLREAELLQDPNGLSADIIERSILNLFPMDSGEASEFPDPSLNGQLQLETSPDREVQNDLMLQSNGSQYSPNEIRENSPSVSPTANITAPFGLKPRSGSWCPEEVQGSLQAESSPRRPQLLSRHVFLRPQRNLESIDPQFTIRRKMEQMREEKELVEQLRESIEMRLKVTLHEDLGAALMDGVVLCHLANHVRPRSVASIHVPSPAVPKLSMAKCRRNVENFLEACRKLGVPEEKLCLPHHILEEKGLVKVGTTVQALLDVTVTKALFT.

Residues 24–37 (LHQHHQHHQHHQHH) are compositionally biased toward basic residues. The disordered stretch occupies residues 24–49 (LHQHHQHHQHHQHHGGTGGTGFNLPL). LRR repeat units lie at residues 60–83 (AANSGGLNLSARKLKEFPRTTAPG), 86–108 (LSDTVRADLSKNRLVEVPMELCQ), 109–131 (FVSLEILNLYHNCIRVIPEAIVN), 132–155 (LQMLTHLNLSRNQLSALPACLCGL), 157–176 (LKVLIASNNKLGSLPEEIGQ), 177–199 (LKQLMELDVSCNEITALPQQIGQ), 200–223 (LKSLRELNVRRNYLKVLPPELVDL), 225–244 (LVKFDFSCNKVLVIPVCFRE), and 245–268 (MKQLQVLLLENNPLQSPPAQICTK). Composition is skewed to basic and acidic residues over residues 301–312 (HQHVEDSKKDSD) and 381–390 (QEREQLAGRA). Positions 301 to 390 (HQHVEDSKKD…QEREQLAGRA (90 aa)) are disordered. Phosphoserine is present on residues Ser-395, Ser-518, and Ser-522. Positions 504–526 (SNGSQYSPNEIRENSPSVSPTAN) are disordered. Thr-581 is subject to Phosphothreonine. Residues 589 to 702 (MREEKELVEQ…TTVQALLDVT (114 aa)) enclose the Calponin-homology (CH) domain.

Interacts (via LRR repeats) with unphosphorylated DOCK8 (via DHR-2 domain); the interaction prevents the association between DOCK8 and CDC42.

It is found in the cytoplasm. Functionally, acts as a negative regulator of GTPase CDC42 by sequestering CDC42-guanine exchange factor DOCK8. Probably by preventing CDC42 activation, negatively regulates CD4(+) T-cell migration in response to chemokine stimulation. In Mus musculus (Mouse), this protein is Leucine-rich repeat and calponin homology domain-containing protein 1 (Lrch1).